The primary structure comprises 155 residues: Ribonuclease H (155 aa).

In terms of domain architecture, RNase H type-1 spans 1–142 (MLKQVEIFTD…CDELARAAAM (142 aa)). Residues Asp-10, Glu-48, Asp-70, and Asp-134 each coordinate Mg(2+).

The protein belongs to the RNase H family. In terms of assembly, monomer. Requires Mg(2+) as cofactor.

It is found in the cytoplasm. The enzyme catalyses Endonucleolytic cleavage to 5'-phosphomonoester.. Its function is as follows. Endonuclease that specifically degrades the RNA of RNA-DNA hybrids. The protein is Ribonuclease H of Escherichia coli O127:H6 (strain E2348/69 / EPEC).